The primary structure comprises 1306 residues: Angiotensin-converting enzyme (1306 aa).

Residues 1–28 form the signal peptide; sequence MGAASGRRSPPLLLPLLLLLLPPPPVIL. Topologically, residues 29 to 1256 are extracellular; that stretch reads ELDPALQPGN…GLNLEEQQAR (1228 aa). Peptidase M2 domains are found at residues 40–624 and 643–1222; these read PADE…LGWP and VSDE…LGWP. N-linked (GlcNAc...) asparagine glycans are attached at residues Asn54, Asn74, Asn111, Asn146, and Asn160. Cysteines 157 and 165 form a disulfide. Chloride is bound at residue Tyr231. Residue Asn318 is glycosylated (N-linked (GlcNAc...) asparagine). Cys359 and Cys377 are disulfide-bonded. Zn(2+) is bound at residue His390. The Proton acceptor 1 role is filled by Glu391. 2 residues coordinate Zn(2+): His394 and Glu418. N-linked (GlcNAc...) asparagine glycosylation is found at Asn445 and Asn509. His520 (proton donor 1) is an active-site residue. Asn523 carries N-linked (GlcNAc...) asparagine glycosylation. Residue Arg529 coordinates chloride. Cys545 and Cys557 form a disulfide bridge. N-linked (GlcNAc...) asparagine glycosylation is found at Asn673, Asn695, Asn714, and Asn760. Residues Cys757 and Cys763 are joined by a disulfide bond. Residues Arg791 and Tyr829 each contribute to the chloride site. Residue Asn942 is glycosylated (N-linked (GlcNAc...) asparagine). A disulfide bridge connects residues Cys957 and Cys975. A Zn(2+)-binding site is contributed by His988. Glu989 functions as the Proton acceptor 2 in the catalytic mechanism. Zn(2+) contacts are provided by His992 and Glu1016. Positions 1090 and 1094 each coordinate chloride. Residue His1118 is the Proton donor 2 of the active site. Arg1127 is a binding site for chloride. An intrachain disulfide couples Cys1143 to Cys1155. Residues Asn1191 and Asn1225 are each glycosylated (N-linked (GlcNAc...) asparagine). Residues 1215 to 1256 form a juxtamembrane stalk region; sequence HGEKLGWPQYNWTPNSARLEGPFVGSGRVNFLGLNLEEQQAR. Residues 1257–1277 traverse the membrane as a helical segment; it reads VGQWVLLFLGVALLVATLGLT. Topologically, residues 1278–1306 are cytoplasmic; sequence QRLFSIRHHSLRRPHRGPQFGSEVELRHS. Residue Ser1299 is modified to Phosphoserine.

This sequence belongs to the peptidase M2 family. Monomer and homodimer; homodimerizes following binding to an inhibitor. Interacts with calmodulin (CALM1, CALM2 or CALM3); interaction takes place in the cytoplasmic region and regulates phosphorylation and proteolytic cleavage. It depends on Zn(2+) as a cofactor. Chloride serves as cofactor. In terms of processing, produced following proteolytic cleavage by secretase enzymes that cleave the transmembrane form in the juxtamembrane stalk region upstream of the transmembrane region. Cleavage can take place at different sites of the juxtamembrane stalk region. Post-translationally, phosphorylated by CK2 on Ser-1299; which allows membrane retention. Phosphorylated on tyrosine residues on its extracellular part, promoting cleavage by secretase enzymes and formation of the soluble form (Angiotensin-converting enzyme, soluble form).

The protein resides in the cell membrane. The protein localises to the cytoplasm. It is found in the secreted. It carries out the reaction Release of a C-terminal dipeptide, oligopeptide-|-Xaa-Yaa, when Xaa is not Pro, and Yaa is neither Asp nor Glu. Thus, conversion of angiotensin I to angiotensin II, with increase in vasoconstrictor activity, but no action on angiotensin II.. The enzyme catalyses angiotensin I + H2O = L-histidyl-L-leucine + angiotensin II. The catalysed reaction is bradykinin + H2O = L-Phe-L-Arg + bradykinin(1-7). It catalyses the reaction substance P + H2O = substance P(1-9) + L-Leu-L-Met-NH2. It carries out the reaction substance P + H2O = substance P(1-8) + Gly-L-Leu-L-Met-NH2. The enzyme catalyses substance P + H2O = L-Phe-L-Phe-Gly-L-Leu-L-Met-NH2 + substance P(1-6). The catalysed reaction is neurotensin + H2O = neurotensin(1-11) + L-isoleucyl-L-leucine. It catalyses the reaction goralatide + H2O = N-acetyl-L-seryl-L-aspartate + L-lysyl-L-proline. It carries out the reaction Met-enkephalin + H2O = L-phenylalanyl-L-methionine + L-tyrosylglycylglycine. The enzyme catalyses Leu-enkephalin + H2O = L-tyrosylglycylglycine + L-phenylalanyl-L-leucine. The catalysed reaction is Met-enkephalin-Arg-Phe + H2O = L-arginyl-L-phenylalanine + Met-enkephalin. The dipeptidyl carboxypeptidase activity is strongly activated by chloride. The dipeptidyl carboxypeptidase activity is specifically inhibited by lisinopril, captopril and enalaprilat. Dipeptidyl carboxypeptidase that removes dipeptides from the C-terminus of a variety of circulating hormones, such as angiotensin I, bradykinin or enkephalins, thereby playing a key role in the regulation of blood pressure, electrolyte homeostasis or synaptic plasticity. Composed of two similar catalytic domains, each possessing a functional active site, with different selectivity for substrates. Plays a major role in the angiotensin-renin system that regulates blood pressure and sodium retention by the kidney by converting angiotensin I to angiotensin II, resulting in an increase of the vasoconstrictor activity of angiotensin. Also able to inactivate bradykinin, a potent vasodilator, and therefore enhance the blood pressure response. Acts as a regulator of synaptic transmission by mediating cleavage of neuropeptide hormones, such as substance P, neurotensin or enkephalins. Catalyzes degradation of different enkephalin neuropeptides (Met-enkephalin, Leu-enkephalin, Met-enkephalin-Arg-Phe and possibly Met-enkephalin-Arg-Gly-Leu). Acts as a regulator of synaptic plasticity in the nucleus accumbens of the brain by mediating cleavage of Met-enkephalin-Arg-Phe, a strong ligand of Mu-type opioid receptor OPRM1, into Met-enkephalin. Met-enkephalin-Arg-Phe cleavage by ACE decreases activation of OPRM1, leading to long-term synaptic potentiation of glutamate release. Also acts as a regulator of hematopoietic stem cell differentiation by mediating degradation of hemoregulatory peptide N-acetyl-SDKP (AcSDKP). Acts as a regulator of cannabinoid signaling pathway by mediating degradation of hemopressin, an antagonist peptide of the cannabinoid receptor CNR1. Involved in amyloid-beta metabolism by catalyzing degradation of Amyloid-beta protein 40 and Amyloid-beta protein 42 peptides, thereby preventing plaque formation. Catalyzes cleavage of cholecystokinin (maturation of Cholecystokinin-8 and Cholecystokinin-5) and Gonadoliberin-1 (both maturation and degradation) hormones. Degradation of hemoregulatory peptide N-acetyl-SDKP (AcSDKP) and amyloid-beta proteins is mediated by the N-terminal catalytic domain, while angiotensin I and cholecystokinin cleavage is mediated by the C-terminal catalytic region. Its function is as follows. Soluble form that is released in blood plasma and other body fluids following proteolytic cleavage in the juxtamembrane stalk region. The sequence is that of Angiotensin-converting enzyme from Bos taurus (Bovine).